The chain runs to 282 residues: Ribosomal RNA small subunit methyltransferase A (282 aa).

Positions 15, 17, 42, 64, 89, and 109 each coordinate S-adenosyl-L-methionine.

This sequence belongs to the class I-like SAM-binding methyltransferase superfamily. rRNA adenine N(6)-methyltransferase family. RsmA subfamily.

The protein localises to the cytoplasm. It carries out the reaction adenosine(1518)/adenosine(1519) in 16S rRNA + 4 S-adenosyl-L-methionine = N(6)-dimethyladenosine(1518)/N(6)-dimethyladenosine(1519) in 16S rRNA + 4 S-adenosyl-L-homocysteine + 4 H(+). In terms of biological role, specifically dimethylates two adjacent adenosines (A1518 and A1519) in the loop of a conserved hairpin near the 3'-end of 16S rRNA in the 30S particle. May play a critical role in biogenesis of 30S subunits. This Prochlorococcus marinus (strain MIT 9211) protein is Ribosomal RNA small subunit methyltransferase A.